A 354-amino-acid chain; its full sequence is Replication factor C subunit 3 (354 aa).

41–48 (GPSGSGKK) provides a ligand contact to ATP.

It belongs to the activator 1 small subunits family. As to quaternary structure, heterotetramer of subunits RFC2, RFC3, RFC4 and RFC5 that can form a complex with RFC1.

Its subcellular location is the nucleus. Functionally, may be involved in DNA replication and thus regulate cell proliferation. The sequence is that of Replication factor C subunit 3 (RFC3) from Arabidopsis thaliana (Mouse-ear cress).